The following is a 416-amino-acid chain: Deferrochelatase (416 aa).

Positions 1 to 28 (MSDEQKKPEQIHRRDILKWGAMAGAAVA) form a signal peptide, tat-type signal. 241-243 (GTG) serves as a coordination point for heme b. A disordered region spans residues 293 to 318 (QEDTFGRRKSSGAPFGQKKETDPVKL). Histidine 326 and arginine 339 together coordinate heme b.

The protein belongs to the DyP-type peroxidase family. As to quaternary structure, component of the iron transporter efeUOB/M complex composed of EfeU, EfeM and EfeB; EfeU is essential for the complex formation. Heme b serves as cofactor. In terms of processing, exported by the Tat system. The position of the signal peptide cleavage has not been experimentally proven.

The protein resides in the secreted. The protein localises to the cell membrane. The enzyme catalyses heme b + 2 H(+) = protoporphyrin IX + Fe(2+). It catalyses the reaction 2 Fe(2+) + H2O2 + 2 H(+) = 2 Fe(3+) + 2 H2O. In terms of biological role, involved in the recovery of exogenous heme iron. Extracts iron from heme while preserving the protoporphyrin ring intact. Part of the iron transporter system efeUOB/M involved in iron import. Catalyzes the peroxide-mediated oxidation of Fe(2+) into Fe(3+); EfeM binds Fe(3+) and delivers it to the cell membrane permease EfeU. This Bacillus subtilis (strain 168) protein is Deferrochelatase.